The sequence spans 229 residues: Potassium/proton antiporter CemA (229 aa).

The next 3 helical transmembrane spans lie at 6-26 (AFIP…ISLS), 114-134 (ILCF…LLII), and 189-209 (IISG…KYWI).

The protein belongs to the CemA family.

It is found in the plastid. The protein resides in the chloroplast inner membrane. The enzyme catalyses K(+)(in) + H(+)(out) = K(+)(out) + H(+)(in). Its function is as follows. Contributes to K(+)/H(+) antiport activity by supporting proton efflux to control proton extrusion and homeostasis in chloroplasts in a light-dependent manner to modulate photosynthesis. Prevents excessive induction of non-photochemical quenching (NPQ) under continuous-light conditions. Indirectly promotes efficient inorganic carbon uptake into chloroplasts. This is Potassium/proton antiporter CemA from Carica papaya (Papaya).